Reading from the N-terminus, the 316-residue chain is Thymidylate synthase (316 aa).

Residues Arg-23 and 178–179 (RR) each bind dUMP. Cys-198 serves as the catalytic Nucleophile. Residues 218–221 (RSAD), Asn-229, and 259–261 (HIY) each bind dUMP. Asp-221 contributes to the (6R)-5,10-methylene-5,6,7,8-tetrahydrofolate binding site. (6R)-5,10-methylene-5,6,7,8-tetrahydrofolate is bound at residue Ala-315.

This sequence belongs to the thymidylate synthase family. Bacterial-type ThyA subfamily. Homodimer.

The protein resides in the cytoplasm. The catalysed reaction is dUMP + (6R)-5,10-methylene-5,6,7,8-tetrahydrofolate = 7,8-dihydrofolate + dTMP. Its pathway is pyrimidine metabolism; dTTP biosynthesis. Its function is as follows. Catalyzes the reductive methylation of 2'-deoxyuridine-5'-monophosphate (dUMP) to 2'-deoxythymidine-5'-monophosphate (dTMP) while utilizing 5,10-methylenetetrahydrofolate (mTHF) as the methyl donor and reductant in the reaction, yielding dihydrofolate (DHF) as a by-product. This enzymatic reaction provides an intracellular de novo source of dTMP, an essential precursor for DNA biosynthesis. The polypeptide is Thymidylate synthase (Levilactobacillus brevis (strain ATCC 367 / BCRC 12310 / CIP 105137 / JCM 1170 / LMG 11437 / NCIMB 947 / NCTC 947) (Lactobacillus brevis)).